The following is a 916-amino-acid chain: MFAPLLKKLFGSKNERDVKRMAKAVQAINALEPQMVALSDEQLKAKTAEFQQRYAKGETLDQLLPEAFAVVREAGKRVMGMRHFDVQLIGGMTLHDGKIAEMRTGEGKTLVGTLPVYLNALSGKGVHVVTVNDYLARRDANWMRPLYEFLGLSVGVVTPFQPPEDKRAAYAADITYGTNNEFGFDYLRDNMAFSLDDKFQRELNFAVVDEVDSILIDEARTPLIISGQAEDSSELYIKINKLIPRLNRQVEEVEGKPTEEGHYSIDEKTRQVELNEQGHQFIEDLLSQNGLLGEGESLYSAHNLSLLTHVYAALRAHTLFHRNVEYIVQGDQILLIDEHTGRTMPGRRLSEGLHQAIEAKEGLPIQAESQTLASTTFQNYFRLYNKLAGMTGTADTEAFEFRQIYGLDVVVIPTHRPIARKDFNDLVYLTQEEKYAAIITDIKQCQALGRPILVGTASIESSEYVSKLLQEAGIEHKVLNAKYHEKEAEIIAQAGAPGSVTIATNMAGRGTDILLGGNWEVEVAALENPTEEQIAQIKAEWQKRHQQVIEAGGLHVIASERHESRRIDNQLRGRAGRQGDPGSSRFYLSLEDNLMRIFASDRVKNFMKALGMQSGEAIEHRMVTNAIEKAQRKVEGRNFDIRKQLLEFDDVANEQRKVIYHMRNTLLSAEDVGETIKEFREETLSATINQHIPPQSLPEQWDIEGLEAALYSDFAVRLPIQQWLDEDDKLYEETLRSKILEQIVAAYYEKEELAGAEALRAFEKQMLLRVLDDLWKDHLSTMDHLRHGIHLRGYAQKNPKQEYKRESFTLFQELLDSIKRDTIRVLSHVQVRREDPAEEEARLRREAEELAKRMQFQHAEAPSMEQAVAGEEEELPEGPAPVVPLEPVRNEQKIGRNEPCPCGSGKKYKHCHGQLD.

Residues Gln87, 105-109, and Asp512 contribute to the ATP site; that span reads GEGKT. The tract at residues 857 to 916 is disordered; that stretch reads QHAEAPSMEQAVAGEEEELPEGPAPVVPLEPVRNEQKIGRNEPCPCGSGKKYKHCHGQLD. Residues Cys900, Cys902, Cys911, and His912 each coordinate Zn(2+). The segment covering 906 to 916 has biased composition (basic residues); it reads KKYKHCHGQLD.

It belongs to the SecA family. In terms of assembly, monomer and homodimer. Part of the essential Sec protein translocation apparatus which comprises SecA, SecYEG and auxiliary proteins SecDF-YajC and YidC. It depends on Zn(2+) as a cofactor.

The protein localises to the cell inner membrane. Its subcellular location is the cytoplasm. It catalyses the reaction ATP + H2O + cellular proteinSide 1 = ADP + phosphate + cellular proteinSide 2.. Its function is as follows. Part of the Sec protein translocase complex. Interacts with the SecYEG preprotein conducting channel. Has a central role in coupling the hydrolysis of ATP to the transfer of proteins into and across the cell membrane, serving both as a receptor for the preprotein-SecB complex and as an ATP-driven molecular motor driving the stepwise translocation of polypeptide chains across the membrane. This chain is Protein translocase subunit SecA, found in Pseudomonas aeruginosa (strain UCBPP-PA14).